We begin with the raw amino-acid sequence, 487 residues long: Protein nucleotidyltransferase YdiU (487 aa).

ATP-binding residues include Gly-90, Gly-92, Arg-93, Lys-113, Asp-125, Gly-126, Arg-176, and Arg-183. Asp-252 acts as the Proton acceptor in catalysis. Residues Asn-253 and Asp-262 each coordinate Mg(2+). Position 262 (Asp-262) interacts with ATP.

The protein belongs to the SELO family. The cofactor is Mg(2+). Mn(2+) is required as a cofactor.

The enzyme catalyses L-seryl-[protein] + ATP = 3-O-(5'-adenylyl)-L-seryl-[protein] + diphosphate. It catalyses the reaction L-threonyl-[protein] + ATP = 3-O-(5'-adenylyl)-L-threonyl-[protein] + diphosphate. It carries out the reaction L-tyrosyl-[protein] + ATP = O-(5'-adenylyl)-L-tyrosyl-[protein] + diphosphate. The catalysed reaction is L-histidyl-[protein] + UTP = N(tele)-(5'-uridylyl)-L-histidyl-[protein] + diphosphate. The enzyme catalyses L-seryl-[protein] + UTP = O-(5'-uridylyl)-L-seryl-[protein] + diphosphate. It catalyses the reaction L-tyrosyl-[protein] + UTP = O-(5'-uridylyl)-L-tyrosyl-[protein] + diphosphate. Functionally, nucleotidyltransferase involved in the post-translational modification of proteins. It can catalyze the addition of adenosine monophosphate (AMP) or uridine monophosphate (UMP) to a protein, resulting in modifications known as AMPylation and UMPylation. In Pseudomonas fluorescens (strain ATCC BAA-477 / NRRL B-23932 / Pf-5), this protein is Protein nucleotidyltransferase YdiU.